The sequence spans 371 residues: Aminomethyltransferase (371 aa).

The protein belongs to the GcvT family. As to quaternary structure, the glycine cleavage system is composed of four proteins: P, T, L and H.

The catalysed reaction is N(6)-[(R)-S(8)-aminomethyldihydrolipoyl]-L-lysyl-[protein] + (6S)-5,6,7,8-tetrahydrofolate = N(6)-[(R)-dihydrolipoyl]-L-lysyl-[protein] + (6R)-5,10-methylene-5,6,7,8-tetrahydrofolate + NH4(+). In terms of biological role, the glycine cleavage system catalyzes the degradation of glycine. The protein is Aminomethyltransferase of Oceanobacillus iheyensis (strain DSM 14371 / CIP 107618 / JCM 11309 / KCTC 3954 / HTE831).